The following is a 685-amino-acid chain: Probable inactive leucine-rich repeat receptor-like protein kinase At1g66830 (685 aa).

Positions 1–21 (MSQLFLILCFILTHFFAIATS) are cleaved as a signal peptide. Over 22 to 305 (LNDQGLALLS…RRANHHSRLC (284 aa)) the chain is Extracellular. Residues Asn-38 and Asn-48 are each glycosylated (N-linked (GlcNAc...) asparagine). 8 LRR repeats span residues 65–89 (DMRV…IGSL), 90–113 (LSLR…LFGL), 115–136 (GLQS…EIGS), 137–161 (LKSL…LIPC), 162–185 (KKLK…LGSN), 186–210 (LVHL…VGSL), 212–234 (NLKG…SLGN), and 235–260 (LPEL…VLLN). Asn-151 is a glycosylation site (N-linked (GlcNAc...) asparagine). Asn-193 carries N-linked (GlcNAc...) asparagine glycosylation. A glycan (N-linked (GlcNAc...) asparagine) is linked at Asn-247. The chain crosses the membrane as a helical span at residues 306–326 (IILTATGGTVAGIIFLASLFI). Over 327–685 (YYLRKASARA…ESFEKLVTSI (359 aa)) the chain is Cytoplasmic. Residues 397–682 (KASAFLLGKS…SVLESFEKLV (286 aa)) form the Protein kinase domain. Ser-399, Ser-480, and Ser-590 each carry phosphoserine.

It belongs to the protein kinase superfamily. Ser/Thr protein kinase family.

It is found in the cell membrane. This chain is Probable inactive leucine-rich repeat receptor-like protein kinase At1g66830, found in Arabidopsis thaliana (Mouse-ear cress).